Reading from the N-terminus, the 261-residue chain is Leucine-rich repeat-containing protein 18 (261 aa).

7 LRR repeats span residues 28-49 (GKKR…ILRL), 51-72 (DMDE…ISKF), 74-95 (NLRW…IGQM), 97-118 (SLLY…VELK), 122-144 (NIRA…GALK), 145-167 (ELHE…SKLP), and 168-189 (KLKK…EIFI).

The protein resides in the cytoplasm. Functionally, may be involved in the regulation of spermatogenesis and sperm maturation. This is Leucine-rich repeat-containing protein 18 (LRRC18) from Homo sapiens (Human).